We begin with the raw amino-acid sequence, 248 residues long: 3-deoxy-manno-octulosonate cytidylyltransferase (248 aa).

This sequence belongs to the KdsB family.

It localises to the cytoplasm. It carries out the reaction 3-deoxy-alpha-D-manno-oct-2-ulosonate + CTP = CMP-3-deoxy-beta-D-manno-octulosonate + diphosphate. It participates in nucleotide-sugar biosynthesis; CMP-3-deoxy-D-manno-octulosonate biosynthesis; CMP-3-deoxy-D-manno-octulosonate from 3-deoxy-D-manno-octulosonate and CTP: step 1/1. The protein operates within bacterial outer membrane biogenesis; lipopolysaccharide biosynthesis. Functionally, activates KDO (a required 8-carbon sugar) for incorporation into bacterial lipopolysaccharide in Gram-negative bacteria. This is 3-deoxy-manno-octulosonate cytidylyltransferase from Salmonella agona (strain SL483).